A 286-amino-acid chain; its full sequence is Phosphate import ATP-binding protein PstB (286 aa).

The segment at 1–27 (MEPKETLRQRWPGRGRTEETGAMKKSD) is disordered. Basic and acidic residues predominate over residues 15-27 (GRTEETGAMKKSD). Residues 33 to 281 (MTVEHLNMYY…PDRKETEDYV (249 aa)) enclose the ABC transporter domain. 65–72 (GPSGCGKS) lines the ATP pocket.

This sequence belongs to the ABC transporter superfamily. Phosphate importer (TC 3.A.1.7) family. In terms of assembly, the complex is composed of two ATP-binding proteins (PstB), two transmembrane proteins (PstC and PstA) and a solute-binding protein (PstS).

The protein localises to the cell membrane. It carries out the reaction phosphate(out) + ATP + H2O = ADP + 2 phosphate(in) + H(+). Its function is as follows. Part of the ABC transporter complex PstSACB involved in phosphate import. Responsible for energy coupling to the transport system. The protein is Phosphate import ATP-binding protein PstB of Rubrobacter xylanophilus (strain DSM 9941 / JCM 11954 / NBRC 16129 / PRD-1).